A 552-amino-acid polypeptide reads, in one-letter code: MAGUK p55 subfamily member 2 (552 aa).

2 consecutive L27 domains span residues 8 to 59 (SESA…EETK) and 60 to 118 (LEAV…YETP). The residue at position 42 (serine 42) is a Phosphoserine. Threonine 117 bears the Phosphothreonine mark. Position 121 is a phosphoserine (serine 121). Residues 140–219 (MVGIRKTAGE…SVILKILPSY (80 aa)) enclose the PDZ domain. The SH3 domain occupies 225–293 (PRQVFVKCHF…PSQLLEEKRK (69 aa)). In terms of domain architecture, Guanylate kinase-like spans 350–537 (RKTLVLIGAQ…TFRELQTAME (188 aa)).

This sequence belongs to the MAGUK family. In terms of assembly, can homomultimerise. Interacts with CACNG2. Interacts (via the SH3-Guanylate kinase-like sub-module) with DLG4/PSD95 and DLGAP1/GKAP. Interacts (via the PDZ domain) with CADM1 (via C-terminus). Interacts with KCNN2/SK2 (via N-terminal domain). Interacts with SRC. In terms of processing, phosphorylated by SRC. In terms of tissue distribution, expressed in pyramidal neurons of CA1 region of the hippocampus.

It localises to the cell projection. The protein resides in the dendrite. It is found in the postsynaptic density. Its subcellular location is the cytoplasm. The protein localises to the cytoskeleton. It localises to the membrane. Postsynaptic MAGUK scaffold protein that links CADM1 cell adhesion molecules to core components of the postsynaptic density. In CA1 pyramidal neurons, required for synaptic KCNN2-containing channel function and long-term potentiation expression. Seems to negatively regulate SRC function in epithelial cells. The sequence is that of MAGUK p55 subfamily member 2 from Mus musculus (Mouse).